A 623-amino-acid chain; its full sequence is Interleukin-27 receptor subunit alpha (623 aa).

The N-terminal stretch at 1–24 is a signal peptide; that stretch reads MNRLRVARLTPLELLLSLMSLLLG. Residues 25–510 are Extracellular-facing; that stretch reads TRPHGSPGPL…HLPDNRIRWK (486 aa). 2 consecutive Fibronectin type-III domains span residues 30-124 and 125-225; these read SPGP…MKPD and TPQI…TPFL. N-linked (GlcNAc...) asparagine glycosylation occurs at asparagine 46. The WSXWS motif motif lies at 211–215; the sequence is WGEWS. N-linked (GlcNAc...) asparagine glycosylation is found at asparagine 296, asparagine 305, asparagine 360, asparagine 368, and asparagine 461. 2 Fibronectin type-III domains span residues 316–412 and 413–505; these read APCD…VPLA and GPAV…LPDN. A helical membrane pass occupies residues 511–531; sequence ALPWFLSLWGLLLMGCGLSLA. Residues 532-623 lie on the Cytoplasmic side of the membrane; the sequence is STRCLQARCL…PTPEELGLLV (92 aa). The Box 1 motif motif lies at 552–560; it reads IWERVPDPA.

It belongs to the type I cytokine receptor family. Type 2 subfamily. As to expression, expressed in CD4+ and CD8+ T-cells, B-cells, natural killer cells and macrophages. Highest levels in CD4+ T-cells and natural killer cells. Expression highest in Th0 cells.

The protein localises to the membrane. Receptor for IL27. Requires IL6ST/GP130 to mediate signal transduction in response to IL27. This signaling system acts through STAT3 and STAT1. Involved in the regulation of Th1-type immune responses. Also appears to be involved in innate defense mechanisms. The chain is Interleukin-27 receptor subunit alpha (Il27ra) from Mus musculus (Mouse).